Reading from the N-terminus, the 379-residue chain is Cytochrome b (379 aa).

Transmembrane regions (helical) follow at residues 33 to 53 (FGSLLGACLTIQIITGLFLAM), 77 to 98 (WTIRYLHANGASMFFLCLFIHV), 113 to 133 (WNVGITLLFSVMATAFMGYVL), and 178 to 198 (FFALHFILPFITSALVMIHLL). Heme b is bound by residues histidine 83 and histidine 97. Heme b is bound by residues histidine 182 and histidine 196. Residue histidine 201 coordinates a ubiquinone. Helical transmembrane passes span 226-246 (TKDFLGLLLLILLLMTMALFY), 288-308 (LGGVMALILSILILVMFPFLQ), 320-340 (LSQFLFWILVADLLTLTWIGG), and 347-367 (FINIGQMASMLYFSLMIFIMP).

This sequence belongs to the cytochrome b family. The cytochrome bc1 complex contains 11 subunits: 3 respiratory subunits (MT-CYB, CYC1 and UQCRFS1), 2 core proteins (UQCRC1 and UQCRC2) and 6 low-molecular weight proteins (UQCRH/QCR6, UQCRB/QCR7, UQCRQ/QCR8, UQCR10/QCR9, UQCR11/QCR10 and a cleavage product of UQCRFS1). This cytochrome bc1 complex then forms a dimer. Heme b serves as cofactor.

The protein localises to the mitochondrion inner membrane. Component of the ubiquinol-cytochrome c reductase complex (complex III or cytochrome b-c1 complex) that is part of the mitochondrial respiratory chain. The b-c1 complex mediates electron transfer from ubiquinol to cytochrome c. Contributes to the generation of a proton gradient across the mitochondrial membrane that is then used for ATP synthesis. This chain is Cytochrome b (MT-CYB), found in Lepilemur sahamalazensis (Sahamalaza sportive lemur).